Consider the following 709-residue polypeptide: Elongation factor G (709 aa).

In terms of domain architecture, tr-type G spans 9–292 (AYYRNIGISA…AVVEYLPSPT (284 aa)). Residues 18–25 (AHIDAGKT), 89–93 (DTPGH), and 143–146 (NKMD) contribute to the GTP site.

It belongs to the TRAFAC class translation factor GTPase superfamily. Classic translation factor GTPase family. EF-G/EF-2 subfamily.

The protein resides in the cytoplasm. In terms of biological role, catalyzes the GTP-dependent ribosomal translocation step during translation elongation. During this step, the ribosome changes from the pre-translocational (PRE) to the post-translocational (POST) state as the newly formed A-site-bound peptidyl-tRNA and P-site-bound deacylated tRNA move to the P and E sites, respectively. Catalyzes the coordinated movement of the two tRNA molecules, the mRNA and conformational changes in the ribosome. The protein is Elongation factor G of Blochmanniella floridana.